The following is a 904-amino-acid chain: Envelope glycoprotein (904 aa).

At 1–726 (MDQDLDGAER…LFDWTSWKDW (726 aa)) the chain is on the extracellular side. N-linked (GlcNAc...) asparagine; by host glycans are attached at residues Asn131, Asn255, Asn277, Asn296, Asn329, Asn367, Asn376, Asn385, Asn410, Asn427, Asn432, Asn452, Asn491, Asn509, and Asn541. The interval 556-576 (AVGLAIFLLVLAIMAITSSLV) is fusion peptide. Residues 588 to 638 (AKVVERVVQNVSYIAQTQDQFTHLFRNINNRLNVLHHRVSYLEYVEEIRQK) are a coiled coil. N-linked (GlcNAc...) asparagine; by host glycosylation is present at Asn597. Residues 615–631 (INNRLNVLHHRVSYLEY) are immunosuppression. 2 N-linked (GlcNAc...) asparagine; by host glycosylation sites follow: Asn663 and Asn694. Positions 676-712 (DEYDKIEEKILKIRVDWLNSSLSDTQDTFGLETSIFD) form a coiled coil. The chain crosses the membrane as a helical span at residues 727 to 747 (IKIIIVIIVLWLLIKILLGML). At 748–904 (RSCAKVSQNY…AWYEGLRGSQ (157 aa)) the chain is on the cytoplasmic side. Disordered regions lie at residues 761–783 (PAEE…PASG) and 862–904 (GGTS…RGSQ). A compositionally biased stretch (polar residues) spans 878–887 (WTGSREQNNP).

The mature envelope protein (Env) consists of a trimer of SU-TM heterodimers attached by non-covalent interactions or by a labile interchain disulfide bond. Specific enzymatic cleavages in vivo yield mature proteins. Envelope glycoproteins are synthesized as an inactive precursor that is N-glycosylated and processed likely by host cell furin or by a furin-like protease in the Golgi to yield the mature SU and TM proteins. The cleavage site between SU and TM requires the minimal sequence [KR]-X-[KR]-R.

Its subcellular location is the virion membrane. It is found in the host cell membrane. The surface protein (SU) attaches the virus to the host cell by binding to its receptor. This interaction triggers the refolding of the transmembrane protein (TM) and is thought to activate its fusogenic potential by unmasking its fusion peptide. Fusion occurs at the host cell plasma membrane. Its function is as follows. The transmembrane protein (TM) acts as a class I viral fusion protein. Under the current model, the protein has at least 3 conformational states: pre-fusion native state, pre-hairpin intermediate state, and post-fusion hairpin state. During viral and target cell membrane fusion, the coiled coil regions (heptad repeats) assume a trimer-of-hairpins structure, positioning the fusion peptide in close proximity to the C-terminal region of the ectodomain. The formation of this structure appears to drive apposition and subsequent fusion of viral and target cell membranes. Membranes fusion leads to delivery of the nucleocapsid into the cytoplasm. This is Envelope glycoprotein (env) from Bovine immunodeficiency virus (strain R29) (BIV).